A 222-amino-acid chain; its full sequence is Adapter protein MecA (222 aa).

Belongs to the MecA family. Homodimer.

In terms of biological role, enables the recognition and targeting of unfolded and aggregated proteins to the ClpC protease or to other proteins involved in proteolysis. The chain is Adapter protein MecA from Lysinibacillus sphaericus (strain C3-41).